The following is a 464-amino-acid chain: MAEYRYDVVVIGAGPAGEGAAMNAAKHGKRVAVIEDKSQVGGNCTHMGTIPSKALRHAVKQIIQFNTNTMFRDIGEPRWFSFPRVLQNAERVIGKQVKIRTQFYARNRVDLYRGRASFIDENRIEVRGGLNGKEVLYGKQIVIATGSRPYLPEDVDFTHRRIYNSDSILKLSHTPRTLIIYGAGVIGCEYASIFVGLGVKVDLINPGERLLSFLDGEISDALSYHLRDNGVLVRHNEQYDSVVGDDHGVVLTMKSGKRIRADAFLWCNGRTGNTDNLGLENIGLEPNARGQLAVDNHYRTKIPHVFAAGDVIGWPSLASAAYDQGRSASSEIVKDDFFRFITDVPTGIYTIPEISSVGRTEAELTEAKVPYEVGQAFFKDLARAQITGDTVGMLKLLFHRETMELLGIHCFGDQASEIVHIGQAIMNQPGELNTIEYFVNTTFNYPTMAEAYRVAALNGLNRIF.

35–44 is a binding site for FAD; it reads EDKSQVGGNC.

It belongs to the class-I pyridine nucleotide-disulfide oxidoreductase family. FAD serves as cofactor.

It is found in the cytoplasm. It carries out the reaction NAD(+) + NADPH = NADH + NADP(+). Functionally, conversion of NADPH, generated by peripheral catabolic pathways, to NADH, which can enter the respiratory chain for energy generation. The polypeptide is Soluble pyridine nucleotide transhydrogenase (Hahella chejuensis (strain KCTC 2396)).